The sequence spans 450 residues: Phosphoglucosamine mutase 2 (450 aa).

Ser-101 serves as the catalytic Phosphoserine intermediate. Residues Ser-101, Asp-245, Asp-247, and Asp-249 each coordinate Mg(2+). At Ser-101 the chain carries Phosphoserine.

The protein belongs to the phosphohexose mutase family. Mg(2+) serves as cofactor. Activated by phosphorylation.

It catalyses the reaction alpha-D-glucosamine 1-phosphate = D-glucosamine 6-phosphate. In terms of biological role, catalyzes the conversion of glucosamine-6-phosphate to glucosamine-1-phosphate. This is Phosphoglucosamine mutase 2 from Shewanella sp. (strain MR-7).